A 431-amino-acid polypeptide reads, in one-letter code: Trigger factor (431 aa).

The PPIase FKBP-type domain occupies Thr165 to Pro250.

The protein belongs to the FKBP-type PPIase family. Tig subfamily.

It localises to the cytoplasm. It carries out the reaction [protein]-peptidylproline (omega=180) = [protein]-peptidylproline (omega=0). Its function is as follows. Involved in protein export. Acts as a chaperone by maintaining the newly synthesized protein in an open conformation. Functions as a peptidyl-prolyl cis-trans isomerase. This chain is Trigger factor, found in Aster yellows witches'-broom phytoplasma (strain AYWB).